The following is a 263-amino-acid chain: 3-methyl-2-oxobutanoate hydroxymethyltransferase (263 aa).

Residues aspartate 45 and aspartate 84 each coordinate Mg(2+). 3-methyl-2-oxobutanoate contacts are provided by residues aspartate 45 to serine 46, aspartate 84, and lysine 112. Glutamate 114 contacts Mg(2+). The active-site Proton acceptor is glutamate 181.

It belongs to the PanB family. As to quaternary structure, homodecamer; pentamer of dimers. Mg(2+) serves as cofactor.

Its subcellular location is the cytoplasm. It catalyses the reaction 3-methyl-2-oxobutanoate + (6R)-5,10-methylene-5,6,7,8-tetrahydrofolate + H2O = 2-dehydropantoate + (6S)-5,6,7,8-tetrahydrofolate. Its pathway is cofactor biosynthesis; (R)-pantothenate biosynthesis; (R)-pantoate from 3-methyl-2-oxobutanoate: step 1/2. Catalyzes the reversible reaction in which hydroxymethyl group from 5,10-methylenetetrahydrofolate is transferred onto alpha-ketoisovalerate to form ketopantoate. The protein is 3-methyl-2-oxobutanoate hydroxymethyltransferase of Photorhabdus laumondii subsp. laumondii (strain DSM 15139 / CIP 105565 / TT01) (Photorhabdus luminescens subsp. laumondii).